The primary structure comprises 301 residues: Rhodopsin (301 aa).

Residues 1–18 are Extracellular-facing; the sequence is LHMIHLHWYQYPPMNPMM. The chain crosses the membrane as a helical span at residues 19 to 43; that stretch reads YPLLLIFMLFTGILCLAGNFVTIWV. Topologically, residues 44–55 are cytoplasmic; sequence FMNTKSLRTPAN. Residues 56–78 traverse the membrane as a helical segment; that stretch reads LLVVNLAMSDFLMMFTMFPPMMV. Residues 79–92 lie on the Extracellular side of the membrane; that stretch reads TCYYHTWTLGPTFC. A disulfide bridge links Cys-92 with Cys-169. The chain crosses the membrane as a helical span at residues 93–115; that stretch reads QVYAFLGNLCGCASIWTMVFITF. Residues 116–118 carry the 'Ionic lock' involved in activated form stabilization motif; the sequence is DRY. Topologically, residues 116-134 are cytoplasmic; the sequence is DRYNVIVKGVAGEPLSNKK. Residues 135–155 form a helical membrane-spanning segment; sequence AAMWILSVWVLSTAWCMAPFF. Over 156–182 the chain is Extracellular; that stretch reads GWNSYVPEGNLTGCGTDYLSEDILSRS. A glycan (N-linked (GlcNAc...) asparagine) is linked at Asn-165. The helical transmembrane segment at 183-204 threads the bilayer; it reads YLYIYSTWVYFLPLTITIYCYV. Residues 205–245 lie on the Cytoplasmic side of the membrane; that stretch reads FIIKAVAAHEKGMRDQAKKMGIKSLRNEEAQKTSAECRLAK. Residues 246-267 form a helical membrane-spanning segment; sequence IAMTTVALWFIAWTPYLLINWV. Residues 268–278 lie on the Extracellular side of the membrane; that stretch reads GMFARSYLSPV. The helical transmembrane segment at 279 to 300 threads the bilayer; the sequence is YTIWGYVFAKANAVYNPIVYAI. Lys-288 is subject to N6-(retinylidene)lysine.

This sequence belongs to the G-protein coupled receptor 1 family. Opsin subfamily. As to quaternary structure, homodimer. Interacts with GNAQ. In terms of processing, contains one covalently linked retinal chromophore.

It localises to the cell projection. The protein resides in the rhabdomere membrane. Its function is as follows. Photoreceptor required for image-forming vision at low light intensity. Can use both retinal and 3-dehydroretinal as visual pigment. Light-induced isomerization of 11-cis to all-trans retinal triggers a conformational change that activates signaling via G-proteins. Signaling via GNAQ probably mediates the activation of phospholipase C. The sequence is that of Rhodopsin (RHO) from Faxonius virilis (Virile crayfish).